The following is a 412-amino-acid chain: Protein arginine N-methyltransferase 2 (412 aa).

The 223-residue stretch at 190–412 (TAADPDTYLN…YYYHPKISFA (223 aa)) folds into the RMT2 domain. S-adenosyl-L-methionine contacts are provided by residues Tyr-197, Met-227, 250–255 (FGMGII), 271–273 (EAH), 298–299 (WQ), and Asp-319.

This sequence belongs to the class I-like SAM-binding methyltransferase superfamily. RMT2 methyltransferase family. In terms of assembly, monomer.

The protein localises to the cytoplasm. It localises to the nucleus. Its function is as follows. S-adenosyl-L-methionine-dependent protein-arginine N-methyltransferase that methylates the delta-nitrogen atom of arginine residues to form N5-methylarginine (type IV) in target proteins. Monomethylates ribosomal protein L12. This Candida glabrata (strain ATCC 2001 / BCRC 20586 / JCM 3761 / NBRC 0622 / NRRL Y-65 / CBS 138) (Yeast) protein is Protein arginine N-methyltransferase 2.